The primary structure comprises 219 residues: Pyridoxine/pyridoxamine 5'-phosphate oxidase (219 aa).

The interval 1 to 23 (MTSSVIPPSPSAADYAAEGDRPL) is disordered. FMN contacts are provided by residues 66-71 (RIVLLK), 81-82 (FT), K88, and Q110. Residue K71 coordinates substrate. The substrate site is built by Y128, R132, and S136. FMN-binding positions include 145–146 (QS) and W191. 197-199 (RMH) provides a ligand contact to substrate. R201 is an FMN binding site.

Belongs to the pyridoxamine 5'-phosphate oxidase family. As to quaternary structure, homodimer. Requires FMN as cofactor.

The catalysed reaction is pyridoxamine 5'-phosphate + O2 + H2O = pyridoxal 5'-phosphate + H2O2 + NH4(+). The enzyme catalyses pyridoxine 5'-phosphate + O2 = pyridoxal 5'-phosphate + H2O2. The protein operates within cofactor metabolism; pyridoxal 5'-phosphate salvage; pyridoxal 5'-phosphate from pyridoxamine 5'-phosphate: step 1/1. Its pathway is cofactor metabolism; pyridoxal 5'-phosphate salvage; pyridoxal 5'-phosphate from pyridoxine 5'-phosphate: step 1/1. Its function is as follows. Catalyzes the oxidation of either pyridoxine 5'-phosphate (PNP) or pyridoxamine 5'-phosphate (PMP) into pyridoxal 5'-phosphate (PLP). The sequence is that of Pyridoxine/pyridoxamine 5'-phosphate oxidase from Hyphomonas neptunium (strain ATCC 15444).